Here is a 372-residue protein sequence, read N- to C-terminus: G patch domain and ankyrin repeat-containing protein 1 (372 aa).

The disordered stretch occupies residues 74–110; sequence DSSSSKPQRAEPMRERKKKRRRVTREPAAAGVPRQGR. ANK repeat units follow at residues 124–155 and 156–186; these read LAAQ…ARDA and FWWT…WVGV. 2 disordered regions span residues 211 to 233 and 251 to 271; these read RESH…SSQF and AHLL…GVPT. Polar residues predominate over residues 220-233; the sequence is PENQNRSTPSSSQF. The G-patch domain occupies 271–317; it reads TSSPGFRLLLRGGWEPGMGLGPRGEGRANPIPTILKRDQEGLGYRSP. Lysine 306 participates in a covalent cross-link: Glycyl lysine isopeptide (Lys-Gly) (interchain with G-Cter in SUMO2). 2 stretches are compositionally biased toward basic and acidic residues: residues 330–340 and 348–357; these read TRAVSGRERVP and RENRRQEEKG. The segment at 330–357 is disordered; it reads TRAVSGRERVPRVATLSQRENRRQEEKG.

The polypeptide is G patch domain and ankyrin repeat-containing protein 1 (Gpank1) (Mus musculus (Mouse)).